The primary structure comprises 169 residues: UPF0303 protein BMEI0598 (169 aa).

This sequence belongs to the UPF0303 family.

The chain is UPF0303 protein BMEI0598 from Brucella melitensis biotype 1 (strain ATCC 23456 / CCUG 17765 / NCTC 10094 / 16M).